Here is an 880-residue protein sequence, read N- to C-terminus: Alanine--tRNA ligase (880 aa).

Zn(2+)-binding residues include histidine 567, histidine 571, cysteine 669, and histidine 673.

The protein belongs to the class-II aminoacyl-tRNA synthetase family. Zn(2+) serves as cofactor.

Its subcellular location is the cytoplasm. It carries out the reaction tRNA(Ala) + L-alanine + ATP = L-alanyl-tRNA(Ala) + AMP + diphosphate. Catalyzes the attachment of alanine to tRNA(Ala) in a two-step reaction: alanine is first activated by ATP to form Ala-AMP and then transferred to the acceptor end of tRNA(Ala). Also edits incorrectly charged Ser-tRNA(Ala) and Gly-tRNA(Ala) via its editing domain. This Bacillus cereus (strain ATCC 14579 / DSM 31 / CCUG 7414 / JCM 2152 / NBRC 15305 / NCIMB 9373 / NCTC 2599 / NRRL B-3711) protein is Alanine--tRNA ligase.